Consider the following 585-residue polypeptide: Arginine--tRNA ligase (585 aa).

The 'HIGH' region signature appears at 131–141; sequence ANPTGPMHVGH.

Belongs to the class-I aminoacyl-tRNA synthetase family. Monomer.

It is found in the cytoplasm. The catalysed reaction is tRNA(Arg) + L-arginine + ATP = L-arginyl-tRNA(Arg) + AMP + diphosphate. The polypeptide is Arginine--tRNA ligase (Brucella melitensis biotype 1 (strain ATCC 23456 / CCUG 17765 / NCTC 10094 / 16M)).